Consider the following 741-residue polypeptide: Eukaryotic peptide chain release factor GTP-binding subunit (741 aa).

The segment at 5–135 (QQQQQQFNAN…SYNNNNNYNN (131 aa)) is several sort of repeats. Over residues 59–161 (QQFGQYGQQQ…DQQQETGSGQ (103 aa)) the composition is skewed to low complexity. Disordered stretches follow at residues 59–186 (QQFG…KKVL) and 199–264 (IVTK…KTEA). Positions 162–311 (MSLEDYQKQQ…EQIDASIVND (150 aa)) are charged. 2 stretches are compositionally biased toward basic and acidic residues: residues 166-175 (DYQKQQKESL) and 202-241 (KKKE…ESKV). A tr-type G domain is found at 316 to 541 (KDHMSIIFMG…YLDSMPLAVR (226 aa)). Residues 325–332 (GHVDAGKS) form a G1 region. 325–332 (GHVDAGKS) contributes to the GTP binding site. The interval 381 to 385 (GKTIE) is G2. A Phosphothreonine modification is found at threonine 399. Positions 402–405 (DAPG) are G3. GTP contacts are provided by residues 402–406 (DAPGH) and 464–467 (NKMD). The interval 464–467 (NKMD) is G4. Residues 505 to 507 (SGY) are G5.

The protein belongs to the TRAFAC class translation factor GTPase superfamily. Classic translation factor GTPase family. ERF3 subfamily.

The protein resides in the cytoplasm. Functionally, involved in translation termination. Stimulates the activity of ERF1. Binds guanine nucleotides. This chain is Eukaryotic peptide chain release factor GTP-binding subunit (SUP2), found in Ogataea pini (Yeast).